The primary structure comprises 407 residues: GTPase Obg (407 aa).

One can recognise an Obg domain in the interval 1–159 (MKFVDEVSIR…RDLKLELKVL (159 aa)). Residues 127–149 (NTRFKSSTNRAPRQTTPGKPGDQ) form a disordered region. A compositionally biased stretch (polar residues) spans 129–143 (RFKSSTNRAPRQTTP). The 174-residue stretch at 160-333 (ADVGLLGLPN…LTRDIMRYLE (174 aa)) folds into the OBG-type G domain. GTP contacts are provided by residues 166 to 173 (GLPNAGKS), 191 to 195 (FTTLV), 213 to 216 (DIPG), 283 to 286 (NKCD), and 314 to 316 (SAI). Positions 173 and 193 each coordinate Mg(2+). Positions 376–407 (SGVKSVHDIGDDDWDEEDVDDEDGPEIIYVRD) are disordered. Residues 385-400 (GDDDWDEEDVDDEDGP) show a composition bias toward acidic residues.

It belongs to the TRAFAC class OBG-HflX-like GTPase superfamily. OBG GTPase family. As to quaternary structure, monomer. The cofactor is Mg(2+).

The protein localises to the cytoplasm. Its function is as follows. An essential GTPase which binds GTP, GDP and possibly (p)ppGpp with moderate affinity, with high nucleotide exchange rates and a fairly low GTP hydrolysis rate. Plays a role in control of the cell cycle, stress response, ribosome biogenesis and in those bacteria that undergo differentiation, in morphogenesis control. The sequence is that of GTPase Obg from Pseudomonas savastanoi pv. phaseolicola (strain 1448A / Race 6) (Pseudomonas syringae pv. phaseolicola (strain 1448A / Race 6)).